The following is a 108-amino-acid chain: uncharacterized protein (108 aa).

A helical membrane pass occupies residues 25–45; it reads VILKSFLLISSWVILVLLLVI.

It is found in the membrane. This is an uncharacterized protein from Saccharomyces cerevisiae (strain ATCC 204508 / S288c) (Baker's yeast).